The following is a 494-amino-acid chain: Tripartite motif-containing protein 5 (494 aa).

Ala-2 is modified (N-acetylalanine). The RING-type zinc finger occupies 15-59 (CPICLELLTEPLSLDCGHSFCQACITANHKESTPHQGERSCPLCR). Ser-86 carries the phosphoserine modification. The B box-type zinc-finger motif lies at 91 to 132 (QKVGHCARHGEKLLLFCEQDGNVICWLCERSQEHRGHHTLLV). Zn(2+) contacts are provided by Cys-96, His-99, Cys-118, and His-124. The stretch at 131-223 (LVEEVAEKYQ…RLVQSESDMV (93 aa)) forms a coiled coil. The segment at 186–199 (FKQLRDILDCEESK) is required for interaction with GABARAP and for autophagy. One can recognise a B30.2/SPRY domain in the interval 280–494 (PDLKAMLQAF…LPMTLCSPSS (215 aa)).

Belongs to the TRIM/RBCC family. In terms of assembly, can form homodimers and homotrimers. In addition to lower-order dimerization, also exhibits a higher-order multimerization and both low- and high-order multimerizations are essential for its restriction activity. Interacts with BTBD1 and BTBD2. Interacts with PSMC4, PSMC5, PSMD7 and HSPA8/HSC70. Interacts (via B30.2/SPRY domain) with HSPA1A/B. Interacts with PSMC2, MAP3K7/TAK1, TAB2 and TAB3. Interacts with SQSTM1. Interacts with TRIM6 and TRIM34. Interacts with ULK1 (phosphorylated form), GABARAP, GABARAPL1, GABARAPL2, MAP1LC3A, MAP1LC3C and BECN1. In terms of processing, degraded in a proteasome-independent fashion in the absence of viral infection but in a proteasome-dependent fashion following exposure to restriction sensitive virus. Post-translationally, autoubiquitinated in a RING finger- and UBE2D2-dependent manner. Monoubiquitinated by TRIM21. Deubiquitinated by Yersinia YopJ. Ubiquitination may not lead to proteasomal degradation.

Its subcellular location is the cytoplasm. The protein resides in the nucleus. It catalyses the reaction S-ubiquitinyl-[E2 ubiquitin-conjugating enzyme]-L-cysteine + [acceptor protein]-L-lysine = [E2 ubiquitin-conjugating enzyme]-L-cysteine + N(6)-ubiquitinyl-[acceptor protein]-L-lysine.. It functions in the pathway protein modification; protein ubiquitination. Capsid-specific restriction factor that prevents infection from non-host-adapted retroviruses. Blocks viral replication early in the life cycle, after viral entry but before reverse transcription. In addition to acting as a capsid-specific restriction factor, also acts as a pattern recognition receptor that activates innate immune signaling in response to the retroviral capsid lattice. Binding to the viral capsid triggers its E3 ubiquitin ligase activity, and in concert with the heterodimeric ubiquitin conjugating enzyme complex UBE2V1-UBE2N (also known as UBC13-UEV1A complex) generates 'Lys-63'-linked polyubiquitin chains, which in turn are catalysts in the autophosphorylation of the MAP3K7/TAK1 complex (includes TAK1, TAB2, and TAB3). Activation of the MAP3K7/TAK1 complex by autophosphorylation results in the induction and expression of NF-kappa-B and MAPK-responsive inflammatory genes, thereby leading to an innate immune response in the infected cell. Plays a role in regulating autophagy through activation of autophagy regulator BECN1 by causing its dissociation from its inhibitors BCL2 and TAB2. In Saguinus labiatus (Red-chested mustached tamarin), this protein is Tripartite motif-containing protein 5 (TRIM5).